The sequence spans 35 residues: Beta-theraphotoxin-Hlv1a (35 aa).

3 disulfide bridges follow: Cys2–Cys17, Cys9–Cys24, and Cys16–Cys31.

It belongs to the neurotoxin 10 (Hwtx-1) family. 10 (haplotoxin-1) subfamily. In terms of tissue distribution, expressed by the venom gland.

It localises to the secreted. Its function is as follows. Spider venom neurotoxin that blocks voltage-gated sodium channel Nav1.3/SCN3A in human (IC(50)=1 uM) and rat (IC(50)=1 uM). This Cyriopagopus lividus (Cobalt blue tarantula) protein is Beta-theraphotoxin-Hlv1a.